The following is a 274-amino-acid chain: Thymidylate synthase (274 aa).

Arg-21 contributes to the dUMP binding site. His-51 contributes to the (6R)-5,10-methylene-5,6,7,8-tetrahydrofolate binding site. Position 123–124 (123–124) interacts with dUMP; that stretch reads RR. Catalysis depends on Cys-156, which acts as the Nucleophile. DUMP-binding positions include 176 to 179, Asn-187, and 217 to 219; these read RSAD and HIY. Asp-179 provides a ligand contact to (6R)-5,10-methylene-5,6,7,8-tetrahydrofolate. Ser-273 is a binding site for (6R)-5,10-methylene-5,6,7,8-tetrahydrofolate.

This sequence belongs to the thymidylate synthase family. Bacterial-type ThyA subfamily. In terms of assembly, homodimer.

Its subcellular location is the cytoplasm. It carries out the reaction dUMP + (6R)-5,10-methylene-5,6,7,8-tetrahydrofolate = 7,8-dihydrofolate + dTMP. It participates in pyrimidine metabolism; dTTP biosynthesis. Its function is as follows. Catalyzes the reductive methylation of 2'-deoxyuridine-5'-monophosphate (dUMP) to 2'-deoxythymidine-5'-monophosphate (dTMP) while utilizing 5,10-methylenetetrahydrofolate (mTHF) as the methyl donor and reductant in the reaction, yielding dihydrofolate (DHF) as a by-product. This enzymatic reaction provides an intracellular de novo source of dTMP, an essential precursor for DNA biosynthesis. The chain is Thymidylate synthase from Francisella tularensis subsp. tularensis (strain SCHU S4 / Schu 4).